A 347-amino-acid chain; its full sequence is NADH-ubiquinone oxidoreductase chain 2 (347 aa).

Helical transmembrane passes span 3–23 (PLIF…VMIS), 25–45 (HWLM…PVLM), 59–79 (YFLT…INLL), 96–116 (IIMT…FWVP), 122–142 (VSLT…LSVL), 145–165 (IAPV…IMIG), 178–198 (ILAY…IFNP), 202–222 (LLNL…FMTV), 240–260 (ITTS…LTGF), 276–296 (IILA…YMRL), and 326–346 (LSPL…MMIL).

The protein belongs to the complex I subunit 2 family. In terms of assembly, core subunit of respiratory chain NADH dehydrogenase (Complex I) which is composed of 45 different subunits. Interacts with TMEM242.

The protein localises to the mitochondrion inner membrane. It carries out the reaction a ubiquinone + NADH + 5 H(+)(in) = a ubiquinol + NAD(+) + 4 H(+)(out). Its function is as follows. Core subunit of the mitochondrial membrane respiratory chain NADH dehydrogenase (Complex I) which catalyzes electron transfer from NADH through the respiratory chain, using ubiquinone as an electron acceptor. Essential for the catalytic activity and assembly of complex I. The sequence is that of NADH-ubiquinone oxidoreductase chain 2 from Peropteryx macrotis (Lesser dog-like bat).